The chain runs to 462 residues: Myb-like transcriptional regulator mfmK (462 aa).

3 HTH myb-type domains span residues 1-54, 56-110, and 113-162; these read MARL…WWNS, ADGT…DPGI, and CDWT…LKHE. 3 DNA-binding regions (H-T-H motif) span residues 32–52, 83–106, and 134–158; these read WRDL…RRWW, WSRV…SQVL, and WATI…STLR. Residues 159-175 are compositionally biased toward basic and acidic residues; that stretch reads LKHENESKRESTIRKSV. Disordered stretches follow at residues 159-184, 216-262, and 374-408; these read LKHE…NFEP, DEEE…VDNG, and STTT…RTSI. Residues 216 to 235 are compositionally biased toward acidic residues; it reads DEEEDDDDDDEDNEEDDGDD. Polar residues-rich tracts occupy residues 374-385 and 396-408; these read STTTGMDSSSAP and FGTS…RTSI.

It localises to the nucleus. Its function is as follows. Myb-like transcriptional regulator; part of the gene cluster that mediates the biosynthesis of the phthalide-terpenoid hybrid 11'-O-desmethylfendlerol. The chain is Myb-like transcriptional regulator mfmK from Annulohypoxylon moriforme (Filamentous fungus).